The following is a 199-amino-acid chain: Peroxiredoxin-1 (199 aa).

N-acetylserine is present on serine 2. Residues 6–165 (AKIGYPAPNF…IIRLVQAFQF (160 aa)) enclose the Thioredoxin domain. Residue lysine 7 is modified to N6-acetyllysine; alternate. A Glycyl lysine isopeptide (Lys-Gly) (interchain with G-Cter in SUMO2); alternate cross-link involves residue lysine 7. N6-acetyllysine occurs at positions 16 and 27. A Phosphoserine modification is found at serine 32. An N6-acetyllysine; alternate modification is found at lysine 35. At lysine 35 the chain carries N6-succinyllysine; alternate. Catalysis depends on cysteine 52, which acts as the Cysteine sulfenic acid (-SOH) intermediate. Threonine 90 is modified (phosphothreonine). Lysine 120 is covalently cross-linked (Glycyl lysine isopeptide (Lys-Gly) (interchain with G-Cter in SUMO2)). N6-acetyllysine is present on lysine 136. Lysine 185 is covalently cross-linked (Glycyl lysine isopeptide (Lys-Gly) (interchain with G-Cter in SUMO1)). N6-acetyllysine is present on lysine 197.

It belongs to the peroxiredoxin family. AhpC/Prx1 subfamily. As to quaternary structure, homodimer; disulfide-linked, upon oxidation. 5 homodimers assemble to form a ring-like decamer. Interacts with GDPD5; forms a mixed-disulfide with GDPD5. Interacts with SESN1 and SESN2. Interacts with FAM107A. Phosphorylated on Thr-90 during the M-phase, which leads to a decrease in enzymatic activity. In terms of processing, acetylation increases reducing activity and resistance to superoxidation. Deacetylated by HDAC6 which decreases reducing activity. As to expression, found in various tissues; high concentration in liver.

The protein localises to the cytoplasm. It carries out the reaction a hydroperoxide + [thioredoxin]-dithiol = an alcohol + [thioredoxin]-disulfide + H2O. Its function is as follows. Thiol-specific peroxidase that catalyzes the reduction of hydrogen peroxide and organic hydroperoxides to water and alcohols, respectively. Plays a role in cell protection against oxidative stress by detoxifying peroxides and as sensor of hydrogen peroxide-mediated signaling events. Might participate in the signaling cascades of growth factors and tumor necrosis factor-alpha by regulating the intracellular concentrations of H(2)O(2). Reduces an intramolecular disulfide bond in GDPD5 that gates the ability to GDPD5 to drive postmitotic motor neuron differentiation. In Mus musculus (Mouse), this protein is Peroxiredoxin-1 (Prdx1).